Here is a 352-residue protein sequence, read N- to C-terminus: Protein RecA (352 aa).

Residue glycine 66–threonine 73 coordinates ATP. The segment at threonine 330 to glutamine 352 is disordered.

The protein belongs to the RecA family.

It is found in the cytoplasm. Its function is as follows. Can catalyze the hydrolysis of ATP in the presence of single-stranded DNA, the ATP-dependent uptake of single-stranded DNA by duplex DNA, and the ATP-dependent hybridization of homologous single-stranded DNAs. It interacts with LexA causing its activation and leading to its autocatalytic cleavage. The chain is Protein RecA from Psychrobacter cryohalolentis (strain ATCC BAA-1226 / DSM 17306 / VKM B-2378 / K5).